We begin with the raw amino-acid sequence, 248 residues long: Probable phosphatase VPA0505 (248 aa).

Positions 8, 10, 16, 41, 74, 102, 132, 194, and 196 each coordinate Zn(2+).

Belongs to the PHP family. Zn(2+) is required as a cofactor.

The protein is Probable phosphatase VPA0505 of Vibrio parahaemolyticus serotype O3:K6 (strain RIMD 2210633).